Consider the following 395-residue polypeptide: S-adenosylmethionine synthase (395 aa).

ATP is bound at residue histidine 19. Residue aspartate 21 coordinates Mg(2+). Glutamate 47 is a binding site for K(+). Residues glutamate 60 and glutamine 103 each contribute to the L-methionine site. The interval 103 to 113 (QSPDIAQGVNS) is flexible loop. Residues 170-172 (DNK), 236-237 (KF), aspartate 245, 251-252 (RK), alanine 268, and lysine 272 contribute to the ATP site. Aspartate 245 lines the L-methionine pocket. Lysine 276 contributes to the L-methionine binding site.

Belongs to the AdoMet synthase family. In terms of assembly, homotetramer; dimer of dimers. Mg(2+) serves as cofactor. Requires K(+) as cofactor.

Its subcellular location is the cytoplasm. It carries out the reaction L-methionine + ATP + H2O = S-adenosyl-L-methionine + phosphate + diphosphate. It functions in the pathway amino-acid biosynthesis; S-adenosyl-L-methionine biosynthesis; S-adenosyl-L-methionine from L-methionine: step 1/1. In terms of biological role, catalyzes the formation of S-adenosylmethionine (AdoMet) from methionine and ATP. The overall synthetic reaction is composed of two sequential steps, AdoMet formation and the subsequent tripolyphosphate hydrolysis which occurs prior to release of AdoMet from the enzyme. The sequence is that of S-adenosylmethionine synthase from Rhodopirellula baltica (strain DSM 10527 / NCIMB 13988 / SH1).